The primary structure comprises 625 residues: tRNA uridine 5-carboxymethylaminomethyl modification enzyme MnmG (625 aa).

Position 11–16 (11–16 (GAGHAG)) interacts with FAD. 271–285 (GPRYCPSIETKIVTF) is an NAD(+) binding site.

The protein belongs to the MnmG family. In terms of assembly, homodimer. Heterotetramer of two MnmE and two MnmG subunits. Requires FAD as cofactor.

The protein resides in the cytoplasm. NAD-binding protein involved in the addition of a carboxymethylaminomethyl (cmnm) group at the wobble position (U34) of certain tRNAs, forming tRNA-cmnm(5)s(2)U34. This chain is tRNA uridine 5-carboxymethylaminomethyl modification enzyme MnmG, found in Parabacteroides distasonis (strain ATCC 8503 / DSM 20701 / CIP 104284 / JCM 5825 / NCTC 11152).